The following is a 715-amino-acid chain: L-type lectin-domain containing receptor kinase VIII.1 (715 aa).

An N-terminal signal peptide occupies residues 1–21; the sequence is MSLFLSFFISILLCFFNGATT. The legume-lectin like stretch occupies residues 22–247; the sequence is TQFDFSTLAI…IHSIEWWSFS (226 aa). The Extracellular portion of the chain corresponds to 22–317; sequence TQFDFSTLAI…SRFCKENPGT (296 aa). Residues N126 and N195 are each glycosylated (N-linked (GlcNAc...) asparagine). The tract at residues 255–296 is disordered; it reads GSGSGSPPPRANLMNPKANSVKSPPPLASQPSSSAIPISSNT. Residues 283–296 are compositionally biased toward low complexity; sequence SQPSSSAIPISSNT. Residues 318–338 form a helical membrane-spanning segment; it reads IAGVVTAGAFFLALFAGALFW. Residues 339–715 are Cytoplasmic-facing; it reads VYSKKFKRVE…IIRSDDDHLV (377 aa). One can recognise a Protein kinase domain in the interval 376 to 676; that stretch reads FNESRIIGHG…MSFSTSHLLL (301 aa). Residues 382–390 and K405 contribute to the ATP site; that span reads IGHGAFGVV. The active-site Proton acceptor is D500.

This sequence in the C-terminal section; belongs to the protein kinase superfamily. Ser/Thr protein kinase family. In the N-terminal section; belongs to the leguminous lectin family.

It is found in the cell membrane. The catalysed reaction is L-seryl-[protein] + ATP = O-phospho-L-seryl-[protein] + ADP + H(+). It catalyses the reaction L-threonyl-[protein] + ATP = O-phospho-L-threonyl-[protein] + ADP + H(+). This chain is L-type lectin-domain containing receptor kinase VIII.1 (LECRK81), found in Arabidopsis thaliana (Mouse-ear cress).